The primary structure comprises 280 residues: Lacto-N-neotetraose biosynthesis glycosyltransferase LgtE (280 aa).

Belongs to the glycosyltransferase 25 family.

It participates in glycan metabolism; lacto-N-neotetraose biosynthesis. The protein operates within bacterial outer membrane biogenesis; lipooligosaccharide biosynthesis. In terms of biological role, adds the first galactose to the lacto-N-tetraose chain in lipooligosaccharide (LOS). The protein is Lacto-N-neotetraose biosynthesis glycosyltransferase LgtE (lgtE) of Neisseria gonorrhoeae.